We begin with the raw amino-acid sequence, 318 residues long: uncharacterized protein (318 aa).

Transmembrane regions (helical) follow at residues Val230 to Ile250 and Ala264 to Ile284.

The protein belongs to the glycosyltransferase 2 family. GtrB subfamily.

Its subcellular location is the cell membrane. This is an uncharacterized protein from Synechocystis sp. (strain ATCC 27184 / PCC 6803 / Kazusa).